We begin with the raw amino-acid sequence, 96 residues long: Large ribosomal subunit protein bL25 (96 aa).

Belongs to the bacterial ribosomal protein bL25 family. As to quaternary structure, part of the 50S ribosomal subunit; part of the 5S rRNA/L5/L18/L25 subcomplex. Contacts the 5S rRNA. Binds to the 5S rRNA independently of L5 and L18.

In terms of biological role, this is one of the proteins that binds to the 5S RNA in the ribosome where it forms part of the central protuberance. The chain is Large ribosomal subunit protein bL25 from Francisella tularensis subsp. tularensis (strain FSC 198).